The sequence spans 141 residues: Small ribosomal subunit protein uS12 (141 aa).

D89 carries the post-translational modification 3-methylthioaspartic acid. The interval 104 to 141 (ASGAVGPSNTNKLNRNVSRSKYGVKRPKAGAKPASKAK) is disordered. Over residues 110-122 (PSNTNKLNRNVSR) the composition is skewed to polar residues. Over residues 125 to 141 (YGVKRPKAGAKPASKAK) the composition is skewed to basic residues.

The protein belongs to the universal ribosomal protein uS12 family. In terms of assembly, part of the 30S ribosomal subunit. Contacts proteins S8 and S17. May interact with IF1 in the 30S initiation complex.

With S4 and S5 plays an important role in translational accuracy. In terms of biological role, interacts with and stabilizes bases of the 16S rRNA that are involved in tRNA selection in the A site and with the mRNA backbone. Located at the interface of the 30S and 50S subunits, it traverses the body of the 30S subunit contacting proteins on the other side and probably holding the rRNA structure together. The combined cluster of proteins S8, S12 and S17 appears to hold together the shoulder and platform of the 30S subunit. The protein is Small ribosomal subunit protein uS12 of Methylacidiphilum infernorum (isolate V4) (Methylokorus infernorum (strain V4)).